We begin with the raw amino-acid sequence, 70 residues long: Small ribosomal subunit protein bS21B (70 aa).

The interval S37–Y70 is disordered. Basic residues predominate over residues R45–Y70.

Belongs to the bacterial ribosomal protein bS21 family.

The protein is Small ribosomal subunit protein bS21B of Burkholderia pseudomallei (strain K96243).